Reading from the N-terminus, the 473-residue chain is Exodeoxyribonuclease I (473 aa).

The 180-residue stretch at 9-188 (IYDYESFGVN…AMADVYATIA (180 aa)) folds into the Exonuclease domain. Mg(2+)-binding residues include D11, E13, and D182. E13 is a binding site for substrate. The ExoI SH3-like domain maps to 198-353 (PKLFQYFFEN…KVADIFNEER (156 aa)). An ExoI C-terminal domain is found at 356-472 (ASNDNVETEL…QVYEYGIKLL (117 aa)).

As to quaternary structure, monomer. Interacts with ssb (via C-terminus); this interaction stimulates the exonuclease activity by recruiting the enzyme to its substrate. It depends on Mg(2+) as a cofactor.

It catalyses the reaction Exonucleolytic cleavage in the 3'- to 5'-direction to yield nucleoside 5'-phosphates.. Its function is as follows. Degrades single-stranded DNA (ssDNA) in a highly processive manner. Also functions as a DNA deoxyribophosphodiesterase that releases deoxyribose-phosphate moieties following the cleavage of DNA at an apurinic/apyrimidinic (AP) site by either an AP endonuclease or AP lyase. Involved in genome maintenance but probably not in phase variation, which contributes to the virulence and disease. The polypeptide is Exodeoxyribonuclease I (sbcB) (Haemophilus influenzae (strain ATCC 51907 / DSM 11121 / KW20 / Rd)).